The following is a 336-amino-acid chain: C4-dicarboxylate-binding periplasmic protein DctP (336 aa).

The signal sequence occupies residues 1–31 (MTRLNTCTFIKQIVKMTSIAALLGASLNSWA). Residues K48, K101, R176, N216, N220, and Y243 each contribute to the (S)-malate site. Residues K48, K101, R176, N216, N220, and Y243 each contribute to the succinate site.

The protein belongs to the bacterial solute-binding protein 7 family. In terms of assembly, the complex comprises the extracytoplasmic solute receptor protein DctP, and the two transmembrane proteins DctQ and DctM.

It is found in the periplasm. Functionally, part of the tripartite ATP-independent periplasmic (TRAP) transport system DctPQM involved in C4-dicarboxylates uptake. Required for the utilization of succinate, fumarate, L-malate and alpha-ketoglutarate. Binds succinate and malate. The chain is C4-dicarboxylate-binding periplasmic protein DctP from Shewanella loihica (strain ATCC BAA-1088 / PV-4).